Consider the following 353-residue polypeptide: Replication factor C subunit 2 (353 aa).

Position 1 is an N-acetylmethionine (Met1). ATP contacts are provided by residues Val28, Arg32, 65–73 (GPPGTGKTS), Asn171, and Arg229.

It belongs to the activator 1 small subunits family. In terms of assembly, replication factor C (RFC) is a heteropentamer of subunits RFC1, RFC2, RFC3, RFC4 and RFC5 and forms a complex with POL30/PCNA in the presence of ATP. Component of the RAD24-RFC complex which consists of RAD14, RFC2, RFC3, RFC4 and RFC5 and associates with the checkpoint clamp DDC1:MEC3:RAD17 complex. Component of the ELG1-RFC complex which consists of ELG1, RFC2, RFC3, RFC4 and RFC5. Component of the CTF18-RFC complex, which consists of CTF18, CTF8, DCC1, RFC2, RFC3, RFC4 and RFC5. RFC2 interacts with ECO1.

It localises to the nucleus. In terms of biological role, component of ATP-dependent clamp loader (RFC and RFC-like) complexes for DNA clamps, such as the POL30/PCNA homotrimer and the checkpoint clamp DDC1:MEC3:RAD17 complex. During a clamp loading circle, the RFC:clamp complex binds to DNA and the recognition of the double-stranded/single-stranded junction stimulates ATP hydrolysis by RFC. The complex presumably provides bipartite ATP sites in which one subunit supplies a catalytic site for hydrolysis of ATP bound to the neighboring subunit. Dissociation of RFC from the clamp leaves the clamp encircling DNA. Component of the replication factor C (RFC or activator 1) complex which loads POL30/PCNA and acts during elongation of primed DNA templates by DNA polymerase delta and epsilon. RFC has an essential but redundant activity in sister chromatid cohesion establishment. Component of the RFC-like complex CTF18-RFC which is required for efficient establishment of chromosome cohesion during S-phase and may load or unload POL30/PCNA. Component of the RFC-like RAD24-RFC complex which loads the checkpoint clamp DDC1:MEC3:RAD17 complex and is involved in DNA repair pathways. Component of the RFC-like ELG1-RFC complex which appears to have a role in DNA replication, replication fork re-start, recombination and repair. RFC2 binds ATP and single-stranded DNA. This chain is Replication factor C subunit 2 (RFC2), found in Saccharomyces cerevisiae (strain ATCC 204508 / S288c) (Baker's yeast).